The primary structure comprises 637 residues: ATP-dependent zinc metalloprotease FtsH (637 aa).

Over Met1–Arg6 the chain is Cytoplasmic. A helical membrane pass occupies residues Ser7–Ser27. The Periplasmic segment spans residues Asp28–Thr103. The helical transmembrane segment at Phe104–Phe124 threads the bilayer. The Cytoplasmic segment spans residues Met125–Ser637. Gly195–Thr202 lines the ATP pocket. Residue His417 participates in Zn(2+) binding. The active site involves Glu418. The Zn(2+) site is built by His421 and Asp495.

It in the central section; belongs to the AAA ATPase family. This sequence in the C-terminal section; belongs to the peptidase M41 family. As to quaternary structure, homohexamer. Zn(2+) is required as a cofactor.

The protein resides in the cell inner membrane. Functionally, acts as a processive, ATP-dependent zinc metallopeptidase for both cytoplasmic and membrane proteins. Plays a role in the quality control of integral membrane proteins. This is ATP-dependent zinc metalloprotease FtsH from Rickettsia prowazekii (strain Madrid E).